Reading from the N-terminus, the 353-residue chain is Photosystem II protein D1 (353 aa).

Thr-2 is subject to N-acetylthreonine. Residue Thr-2 is modified to Phosphothreonine. 3 helical membrane passes run 29–46 (YIGWFGVLMIPTLLTATS), 118–133 (HFLLGVACYMGREWEL), and 142–156 (WIVVAYSAPVAAATA). Residue His-118 coordinates chlorophyll a. Tyr-126 serves as a coordination point for pheophytin a. 2 residues coordinate [CaMn4O5] cluster: Asp-170 and Glu-189. The chain crosses the membrane as a helical span at residues 197 to 218 (FHMLGVAGVFGGSLFSAMHGSL). His-198 is a chlorophyll a binding site. Residues His-215 and 264-265 (SF) each bind a quinone. Fe cation is bound at residue His-215. His-272 serves as a coordination point for Fe cation. A helical membrane pass occupies residues 274 to 288 (FLAAWPVVGIWFTAL). Positions 332, 333, 342, and 344 each coordinate [CaMn4O5] cluster. Positions 345–353 (AVDAPSISG) are excised as a propeptide.

The protein belongs to the reaction center PufL/M/PsbA/D family. PSII is composed of 1 copy each of membrane proteins PsbA, PsbB, PsbC, PsbD, PsbE, PsbF, PsbH, PsbI, PsbJ, PsbK, PsbL, PsbM, PsbT, PsbX, PsbY, PsbZ, Psb30/Ycf12, at least 3 peripheral proteins of the oxygen-evolving complex and a large number of cofactors. It forms dimeric complexes. The D1/D2 heterodimer binds P680, chlorophylls that are the primary electron donor of PSII, and subsequent electron acceptors. It shares a non-heme iron and each subunit binds pheophytin, quinone, additional chlorophylls, carotenoids and lipids. D1 provides most of the ligands for the Mn4-Ca-O5 cluster of the oxygen-evolving complex (OEC). There is also a Cl(-1) ion associated with D1 and D2, which is required for oxygen evolution. The PSII complex binds additional chlorophylls, carotenoids and specific lipids. serves as cofactor. Post-translationally, tyr-161 forms a radical intermediate that is referred to as redox-active TyrZ, YZ or Y-Z. In terms of processing, C-terminally processed by CTPA; processing is essential to allow assembly of the oxygen-evolving complex and thus photosynthetic growth.

The protein localises to the plastid. The protein resides in the chloroplast thylakoid membrane. It catalyses the reaction 2 a plastoquinone + 4 hnu + 2 H2O = 2 a plastoquinol + O2. Its function is as follows. Photosystem II (PSII) is a light-driven water:plastoquinone oxidoreductase that uses light energy to abstract electrons from H(2)O, generating O(2) and a proton gradient subsequently used for ATP formation. It consists of a core antenna complex that captures photons, and an electron transfer chain that converts photonic excitation into a charge separation. The D1/D2 (PsbA/PsbD) reaction center heterodimer binds P680, the primary electron donor of PSII as well as several subsequent electron acceptors. The protein is Photosystem II protein D1 of Vicia faba (Broad bean).